Consider the following 360-residue polypeptide: Photosystem II protein D1 (360 aa).

Helical transmembrane passes span 29–46 (YIGWFGCLMFPTLLTATS), 118–133 (HFLLGVASYMGREWEL), and 142–156 (WIFVAFSAPVAAASA). Residue His118 coordinates chlorophyll a. Residue Tyr126 coordinates pheophytin a. 2 residues coordinate [CaMn4O5] cluster: Asp170 and Glu189. A helical transmembrane segment spans residues 197-218 (FHMAGVAGVFGGSLFSAMHGSL). A chlorophyll a-binding site is contributed by His198. A quinone-binding positions include His215 and 264 to 265 (SF). His215 is a binding site for Fe cation. His272 contributes to the Fe cation binding site. Residues 274 to 288 (FLALWPVVGIWLTAM) form a helical membrane-spanning segment. Residues His332, Glu333, Asp342, and Ala344 each contribute to the [CaMn4O5] cluster site. Positions 345–360 (SGEVLPVALTAPAVNG) are excised as a propeptide.

It belongs to the reaction center PufL/M/PsbA/D family. PSII is composed of 1 copy each of membrane proteins PsbA, PsbB, PsbC, PsbD, PsbE, PsbF, PsbH, PsbI, PsbJ, PsbK, PsbL, PsbM, PsbT, PsbX, PsbY, PsbZ, Psb30/Ycf12, at least 3 peripheral proteins of the oxygen-evolving complex and a large number of cofactors. It forms dimeric complexes. The D1/D2 heterodimer binds P680, chlorophylls that are the primary electron donor of PSII, and subsequent electron acceptors. It shares a non-heme iron and each subunit binds pheophytin, quinone, additional chlorophylls, carotenoids and lipids. D1 provides most of the ligands for the Mn4-Ca-O5 cluster of the oxygen-evolving complex (OEC). There is also a Cl(-1) ion associated with D1 and D2, which is required for oxygen evolution. The PSII complex binds additional chlorophylls, carotenoids and specific lipids. serves as cofactor. In terms of processing, tyr-161 forms a radical intermediate that is referred to as redox-active TyrZ, YZ or Y-Z. C-terminally processed by CTPA; processing is essential to allow assembly of the oxygen-evolving complex and thus photosynthetic growth.

The protein localises to the plastid. Its subcellular location is the chloroplast thylakoid membrane. The enzyme catalyses 2 a plastoquinone + 4 hnu + 2 H2O = 2 a plastoquinol + O2. Functionally, photosystem II (PSII) is a light-driven water:plastoquinone oxidoreductase that uses light energy to abstract electrons from H(2)O, generating O(2) and a proton gradient subsequently used for ATP formation. It consists of a core antenna complex that captures photons, and an electron transfer chain that converts photonic excitation into a charge separation. The D1/D2 (PsbA/PsbD) reaction center heterodimer binds P680, the primary electron donor of PSII as well as several subsequent electron acceptors. In Phaeodactylum tricornutum (strain CCAP 1055/1), this protein is Photosystem II protein D1.